The following is a 97-amino-acid chain: Citrate lyase acyl carrier protein (97 aa).

Ser14 is subject to O-(phosphoribosyl dephospho-coenzyme A)serine.

It belongs to the CitD family. In terms of assembly, oligomer with a subunit composition of (alpha,beta,gamma)6.

Its subcellular location is the cytoplasm. Functionally, covalent carrier of the coenzyme of citrate lyase. In Leuconostoc citreum (strain KM20), this protein is Citrate lyase acyl carrier protein.